The chain runs to 77 residues: Vacuolar ATPase assembly integral membrane protein VMA21 (77 aa).

The Cytoplasmic portion of the chain corresponds to 1-8 (MAVDVPTS). A helical membrane pass occupies residues 9–29 (VIVKLMFFTLAMVSFPVLTFF). The Lumenal portion of the chain corresponds to 30 to 41 (VSQQYTSNTLVN). A helical membrane pass occupies residues 42–62 (GGLAALAANVVLFAYVIMAFS). The Cytoplasmic segment spans residues 63-77 (EDVPQSDGKESKKQQ). The short motif at 74 to 77 (KKQQ) is the Prevents secretion from ER element.

This sequence belongs to the VMA21 family.

It is found in the endoplasmic reticulum membrane. It localises to the endoplasmic reticulum-Golgi intermediate compartment membrane. The protein localises to the cytoplasmic vesicle. The protein resides in the COPII-coated vesicle membrane. In terms of biological role, required for the assembly of the V0 complex of the vacuolar ATPase (V-ATPase) in the endoplasmic reticulum. The protein is Vacuolar ATPase assembly integral membrane protein VMA21 of Eremothecium gossypii (strain ATCC 10895 / CBS 109.51 / FGSC 9923 / NRRL Y-1056) (Yeast).